The sequence spans 328 residues: tRNA dimethylallyltransferase (328 aa).

Residue glycine 23 to serine 30 participates in ATP binding. Threonine 25–serine 30 is a substrate binding site. The tract at residues aspartate 48 to glutamine 51 is interaction with substrate tRNA.

This sequence belongs to the IPP transferase family. Monomer. It depends on Mg(2+) as a cofactor.

The catalysed reaction is adenosine(37) in tRNA + dimethylallyl diphosphate = N(6)-dimethylallyladenosine(37) in tRNA + diphosphate. Catalyzes the transfer of a dimethylallyl group onto the adenine at position 37 in tRNAs that read codons beginning with uridine, leading to the formation of N6-(dimethylallyl)adenosine (i(6)A). In Rhodopseudomonas palustris (strain BisA53), this protein is tRNA dimethylallyltransferase.